The chain runs to 142 residues: Ninjurin-2 (142 aa).

Residues 1–21 (MESARENIDLQPGSSDPRSQP) form a disordered region. Residues 1–60 (MESARENIDLQPGSSDPRSQPINLNHYATKKSVAESMLDVALFMSNAMRLKAVLEQGPSS) are Extracellular-facing. Residues 12 to 21 (PGSSDPRSQP) are compositionally biased toward polar residues. The segment at 25-37 (NHYATKKSVAESM) is helix alpha1. The segment at 38 to 57 (LDVALFMSNAMRLKAVLEQG) is helix alpha2. Residues 61–92 (HYYTTLVTLISLSLLLQVVIGVLLVVIARLNL) form a helical membrane-spanning segment. Topologically, residues 93-96 (NEVE) are cytoplasmic. Residues 97–126 (KQWRLNQLNNAATILVFFTVVINVFITAFG) traverse the membrane as a helical segment. Gln103 is a cholesterol binding site. Topologically, residues 127-142 (AHKTGFLAARASRNPL) are extracellular.

It belongs to the ninjurin family. Homooligomer; in response to stimuli, homooligomerizes into filaments. In contrast to NINJ1, the filament is curved toward the intracellular space, preventing its circularization on a relatively flat membrane to mediate plasma membrane rupture: curvature is caused by cholesterol-binding at the cytoplasmic leaflet. As to expression, widely expressed. In adult, higher expression in the bone marrow and peripheral blood lymphocytes, medium in the lung, lymph node, thyroid, uterus, thymus, spleen, prostate and skeletal muscle, lower in the liver, placenta, brain, heart and kidney. In embryo, higher expression in the thymus, heart and liver, lower in the spleen, lung, brain and kidney.

Its subcellular location is the cell membrane. Its role in unclear. In contrast to NINJ1 paralog, does not mediate plasma membrane rupture (cytolysis) downstream of necroptotic and pyroptotic programmed cell death. While it is able to oligomerize and form filaments, filaments are curved toward the intracellular space, preventing circularization to mediate plasma membrane rupture. May act as a homophilic transmembrane adhesion molecule involved in nerve regeneration. Promotes axonal growth. The polypeptide is Ninjurin-2 (Homo sapiens (Human)).